The sequence spans 500 residues: Monocarboxylate transporter 1 (500 aa).

Topologically, residues 1 to 22 are cytoplasmic; it reads MPPAVGGPVGYTPPDGGWGWAV. A helical transmembrane segment spans residues 23 to 44; that stretch reads VIGAFISIGFSYAFPKSITVFF. Lys-38 is a (S)-lactate binding site. Topologically, residues 45–55 are extracellular; it reads KEIEGIFHATT. Residues 56-80 form a helical membrane-spanning segment; it reads SEVSWISSIMLAVMYGGGPISSILV. Topologically, residues 81–84 are cytoplasmic; the sequence is NKYG. A helical membrane pass occupies residues 85–105; sequence SRIVMIVGGCLSGCGLIAASF. Over 106-109 the chain is Extracellular; that stretch reads CNTV. A helical membrane pass occupies residues 110–132; the sequence is QQLYVCIGVIGGLGLAFNLNPAL. Residues 133 to 146 are Cytoplasmic-facing; the sequence is TMIGKYFYKRRPLA. The chain crosses the membrane as a helical span at residues 147-169; the sequence is NGLAMAGSPVFLCTLAPLNQVFF. Residues 170 to 174 are Extracellular-facing; sequence GIFGW. Residues 175–194 traverse the membrane as a helical segment; sequence RGSFLILGGLLLNCCVAGAL. Residues 195–261 are Cytoplasmic-facing; the sequence is MRPIGPKPTK…FLDLTLFTHR (67 aa). Ser-210 and Ser-213 each carry phosphoserine. The residue at position 231 (Thr-231) is a Phosphothreonine. A helical transmembrane segment spans residues 262–288; sequence GFLLYLSGNVIMFFGLFAPLVFLSSYG. Over 289 to 295 the chain is Extracellular; that stretch reads KSQHYSS. The chain crosses the membrane as a helical span at residues 296 to 317; the sequence is EKSAFLLSILAFVDMVARPSMG. Asp-309 is a H(+) binding site. Arg-313 provides a ligand contact to (S)-lactate. At 318–328 the chain is on the cytoplasmic side; that stretch reads LVANTKPIRPR. Residues 329–349 traverse the membrane as a helical segment; the sequence is IQYFFAASVVANGVCHMLAPL. Residues 350 to 353 are Extracellular-facing; it reads STTY. The helical transmembrane segment at 354-375 threads the bilayer; the sequence is VGFCVYAGFFGFAFGWLSSVLF. Residues 376-389 are Cytoplasmic-facing; the sequence is ETLMDLVGPQRFSS. The helical transmembrane segment at 390 to 410 threads the bilayer; it reads AVGLVTIVECCPVLLGPPLLG. Over 411–421 the chain is Extracellular; that stretch reads RLNDMYGDYKY. Residues 422–443 form a helical membrane-spanning segment; that stretch reads TYWACGVVLIISGIYLFIGMGI. The Cytoplasmic portion of the chain corresponds to 444–500; that stretch reads NYRLLAKEQKANEQKKESKEEETSIDVAGKPNEVTKAAESPDQKDTDGGPKEEESPV. Over residues 454 to 465 the composition is skewed to basic and acidic residues; it reads ANEQKKESKEEE. The tract at residues 454-500 is disordered; the sequence is ANEQKKESKEEETSIDVAGKPNEVTKAAESPDQKDTDGGPKEEESPV. Ser-461 carries the post-translational modification Phosphoserine. Phosphothreonine is present on Thr-466. Ser-467, Ser-483, and Ser-498 each carry phosphoserine. The span at 482-500 shows a compositional bias: basic and acidic residues; it reads ESPDQKDTDGGPKEEESPV.

Belongs to the major facilitator superfamily. Monocarboxylate porter (TC 2.A.1.13) family. Interacts with EMB; interaction mediates SLC16A1 targeting to the plasma membrane. Interacts with isoform 2 of BSG; interaction mediates SLC16A1 targeting to the plasma membrane. In terms of tissue distribution, widely expressed. Detected in heart and in blood lymphocytes and monocytes (at protein level).

The protein resides in the cell membrane. Its subcellular location is the basolateral cell membrane. The protein localises to the apical cell membrane. It catalyses the reaction (S)-lactate(in) + H(+)(in) = (S)-lactate(out) + H(+)(out). The catalysed reaction is acetate(out) + H(+)(out) = acetate(in) + H(+)(in). It carries out the reaction acetoacetate(out) + H(+)(out) = acetoacetate(in) + H(+)(in). The enzyme catalyses pyruvate(out) + H(+)(out) = pyruvate(in) + H(+)(in). It catalyses the reaction (R)-3-hydroxybutanoate(out) + H(+)(out) = (R)-3-hydroxybutanoate(in) + H(+)(in). The catalysed reaction is 3-methyl-2-oxobutanoate(out) + H(+)(out) = 3-methyl-2-oxobutanoate(in) + H(+)(in). It carries out the reaction 4-methyl-2-oxopentanoate(out) + H(+)(out) = 4-methyl-2-oxopentanoate(in) + H(+)(in). The enzyme catalyses succinate(in) + 2 H(+)(in) = succinate(out) + 2 H(+)(out). Its activity is regulated as follows. Selectively inhibited by AZD3965, that acts as a competitive inhibitor binding to the central channel in the outward open conformation. Functionally, bidirectional proton-coupled monocarboxylate transporter. Catalyzes the rapid transport across the plasma membrane of many monocarboxylates such as lactate, pyruvate, acetate and the ketone bodies acetoacetate and beta-hydroxybutyrate, and thus contributes to the maintenance of intracellular pH. The transport direction is determined by the proton motive force and the concentration gradient of the substrate monocarboxylate. MCT1 is a major lactate exporter. Plays a role in cellular responses to a high-fat diet by modulating the cellular levels of lactate and pyruvate that contribute to the regulation of central metabolic pathways and insulin secretion, with concomitant effects on plasma insulin levels and blood glucose homeostasis. Facilitates the protonated monocarboxylate form of succinate export, that its transient protonation upon muscle cell acidification in exercising muscle and ischemic heart. Functions via alternate outward- and inward-open conformation states. Protonation and deprotonation of 309-Asp is essential for the conformational transition. The protein is Monocarboxylate transporter 1 of Homo sapiens (Human).